We begin with the raw amino-acid sequence, 106 residues long: uncharacterized protein (106 aa).

It belongs to the csb family.

This is an uncharacterized protein from Dictyostelium discoideum (Social amoeba).